A 156-amino-acid polypeptide reads, in one-letter code: Small ribosomal subunit protein uS7 (156 aa).

This sequence belongs to the universal ribosomal protein uS7 family. As to quaternary structure, part of the 30S ribosomal subunit. Contacts proteins S9 and S11.

Its function is as follows. One of the primary rRNA binding proteins, it binds directly to 16S rRNA where it nucleates assembly of the head domain of the 30S subunit. Is located at the subunit interface close to the decoding center, probably blocks exit of the E-site tRNA. This chain is Small ribosomal subunit protein uS7, found in Bordetella bronchiseptica (strain ATCC BAA-588 / NCTC 13252 / RB50) (Alcaligenes bronchisepticus).